Here is a 126-residue protein sequence, read N- to C-terminus: Alpha-lactalbumin (126 aa).

Residues 1-126 (RIFQICELSR…CNSDLDQWKC (126 aa)) enclose the C-type lysozyme domain. 4 disulfides stabilise this stretch: cysteine 6-cysteine 126, cysteine 30-cysteine 117, cysteine 63-cysteine 82, and cysteine 78-cysteine 96. The N-linked (GlcNAc...) asparagine glycan is linked to asparagine 47. Ca(2+) is bound by residues lysine 84, aspartate 87, aspartate 89, aspartate 92, and aspartate 93.

This sequence belongs to the glycosyl hydrolase 22 family. Lactose synthase (LS) is a heterodimer of a catalytic component, beta1,4-galactosyltransferase (beta4Gal-T1) and a regulatory component, alpha-lactalbumin (LA). In terms of tissue distribution, mammary gland specific. Secreted in milk.

The protein resides in the secreted. Regulatory subunit of lactose synthase, changes the substrate specificity of galactosyltransferase in the mammary gland making glucose a good acceptor substrate for this enzyme. This enables LS to synthesize lactose, the major carbohydrate component of milk. In other tissues, galactosyltransferase transfers galactose onto the N-acetylglucosamine of the oligosaccharide chains in glycoproteins. This is Alpha-lactalbumin (LALBA) from Ornithorhynchus anatinus (Duckbill platypus).